The sequence spans 130 residues: Protein NrdI (130 aa).

It belongs to the NrdI family.

Functionally, probably involved in ribonucleotide reductase function. This chain is Protein NrdI, found in Bartonella bacilliformis (strain ATCC 35685 / KC583 / Herrer 020/F12,63).